The sequence spans 181 residues: MFVSRLAASGLLLLALLAVSLDGKPLQQWSQRWPHLEIPPLVVQNWKSPTQLQARESPAGGTTALREELSLGPEAALDTPPAGPDGGPRGSKAAAAAPQRLSKSKGASATSAASRDLRTDGKQARQNWGRLVSPDHHSAAGGGGGGGGGARRLKGLAKKRAGNGCFGLKLDRIGSMSGLGC.

The first 23 residues, 1-23 (MFVSRLAASGLLLLALLAVSLDG), serve as a signal peptide directing secretion. Residues 24-30 (KPLQQWS) constitute a propeptide that is removed on maturation. Pyrrolidone carboxylic acid is present on Q31. Residues 41 to 43 (LVV) constitute a propeptide that is removed on maturation. At Q44 the chain carries Pyrrolidone carboxylic acid. 2 propeptides span residues 50 to 78 (TQLQ…AALD) and 90 to 157 (GSKA…KGLA). The segment at 74–153 (EAALDTPPAG…GGGGGGARRL (80 aa)) is disordered. Residues 104–114 (SKGASATSAAS) are compositionally biased toward low complexity. The segment covering 140 to 150 (AGGGGGGGGGA) has biased composition (gly residues). A disulfide bond links C165 and C181.

In the N-terminal section; belongs to the bradykinin-potentiating peptide family. It in the C-terminal section; belongs to the natriuretic peptide family. Venom gland.

The protein localises to the secreted. In terms of biological role, bradykinin-potentiating peptide both inhibits the activity of the angiotensin-converting enzyme (ACE) and enhances the action of bradykinin by inhibiting the peptidases that inactivate it. It acts as an indirect hypotensive agent. Antagonizes the vasodilatory actions of bradykinin at the B2 bradykinin receptor. Has no demonstrable hypotensive activity when injected intravenously in rats. Functionally, has a vasorelaxant activity in rat aortic strips and a diuretic potency in anesthetized rats. May act by activating natriuretic receptors (NPR1 and/or NPR2). The chain is Bradykinin-potentiating and C-type natriuretic peptides from Crotalus durissus collilineatus (Brazilian rattlesnake).